Consider the following 336-residue polypeptide: MTEAQTACATTETPVAAPAAPRWRVADVIALYELPFNDLLFRAQQTHREHFDANAIQLSTLLSIKTGGCEEDCGYCSQSAHHDTGLKAEKLMEVDAVLAAARTAKENGATRFCMGAAWRNPKDRHIEPIKEMIRGVKDMGLETCVTLGMLEEHQAKALAEAGLDYYNHNLDTSPEFYGQIISTRTYQDRLDTLERVRDAGINVCCGGIIGMGESRRERAGLIAQLANMNPYPESVPINNLVAIEGTPLANAQALDPFEFVRTIAVARITMPKAMVRLSAGREQLDDAMQALCFLAGANSMFYGDVLLTTGNPRAEADRKLLARLGMWASEASQLSA.

The Radical SAM core domain occupies 54 to 281 (NAIQLSTLLS…KAMVRLSAGR (228 aa)). [4Fe-4S] cluster-binding residues include C69, C73, and C76. The [2Fe-2S] cluster site is built by C113, C144, C204, and R276.

It belongs to the radical SAM superfamily. Biotin synthase family. As to quaternary structure, homodimer. [4Fe-4S] cluster is required as a cofactor. It depends on [2Fe-2S] cluster as a cofactor.

It catalyses the reaction (4R,5S)-dethiobiotin + (sulfur carrier)-SH + 2 reduced [2Fe-2S]-[ferredoxin] + 2 S-adenosyl-L-methionine = (sulfur carrier)-H + biotin + 2 5'-deoxyadenosine + 2 L-methionine + 2 oxidized [2Fe-2S]-[ferredoxin]. It participates in cofactor biosynthesis; biotin biosynthesis; biotin from 7,8-diaminononanoate: step 2/2. Functionally, catalyzes the conversion of dethiobiotin (DTB) to biotin by the insertion of a sulfur atom into dethiobiotin via a radical-based mechanism. The polypeptide is Biotin synthase (Burkholderia pseudomallei (strain 1710b)).